A 345-amino-acid polypeptide reads, in one-letter code: Phenylalanine--tRNA ligase alpha subunit (345 aa).

E253 serves as a coordination point for Mg(2+).

The protein belongs to the class-II aminoacyl-tRNA synthetase family. Phe-tRNA synthetase alpha subunit type 1 subfamily. Tetramer of two alpha and two beta subunits. It depends on Mg(2+) as a cofactor.

The protein localises to the cytoplasm. It catalyses the reaction tRNA(Phe) + L-phenylalanine + ATP = L-phenylalanyl-tRNA(Phe) + AMP + diphosphate + H(+). The sequence is that of Phenylalanine--tRNA ligase alpha subunit from Lawsonia intracellularis (strain PHE/MN1-00).